The primary structure comprises 438 residues: Citrate synthase (438 aa).

Active-site residues include His-306 and Asp-364.

Belongs to the citrate synthase family.

It carries out the reaction oxaloacetate + acetyl-CoA + H2O = citrate + CoA + H(+). It functions in the pathway carbohydrate metabolism; tricarboxylic acid cycle; isocitrate from oxaloacetate: step 1/2. The sequence is that of Citrate synthase (gltA) from Bartonella quintana (strain Toulouse) (Rochalimaea quintana).